We begin with the raw amino-acid sequence, 197 residues long: UPF0301 protein Adeh_3962 (197 aa).

This sequence belongs to the UPF0301 (AlgH) family.

In Anaeromyxobacter dehalogenans (strain 2CP-C), this protein is UPF0301 protein Adeh_3962.